The primary structure comprises 361 residues: Very-long-chain 3-oxoacyl-CoA reductase (361 aa).

A helical membrane pass occupies residues Pro-32 to Phe-52. The NADP(+) site is built by Val-79, Asp-133, Asn-163, Arg-198, Tyr-236, Lys-240, Val-269, and Ser-271. The active-site Proton donor is Tyr-236. The active-site Lowers pKa of active site Tyr is Lys-240.

The protein belongs to the short-chain dehydrogenases/reductases (SDR) family.

It localises to the endoplasmic reticulum membrane. The enzyme catalyses a very-long-chain (3R)-3-hydroxyacyl-CoA + NADP(+) = a very-long-chain 3-oxoacyl-CoA + NADPH + H(+). It functions in the pathway lipid metabolism; fatty acid biosynthesis. Component of the microsomal membrane bound fatty acid elongation system, which produces the 26-carbon very long-chain fatty acids (VLCFA) from palmitate. Catalyzes the reduction of the 3-ketoacyl-CoA intermediate that is formed in each cycle of fatty acid elongation. VLCFAs serve as precursors for ceramide and sphingolipids. The sequence is that of Very-long-chain 3-oxoacyl-CoA reductase from Cryptococcus neoformans var. neoformans serotype D (strain B-3501A) (Filobasidiella neoformans).